Here is a 156-residue protein sequence, read N- to C-terminus: SsrA-binding protein (156 aa).

It belongs to the SmpB family.

The protein resides in the cytoplasm. Its function is as follows. Required for rescue of stalled ribosomes mediated by trans-translation. Binds to transfer-messenger RNA (tmRNA), required for stable association of tmRNA with ribosomes. tmRNA and SmpB together mimic tRNA shape, replacing the anticodon stem-loop with SmpB. tmRNA is encoded by the ssrA gene; the 2 termini fold to resemble tRNA(Ala) and it encodes a 'tag peptide', a short internal open reading frame. During trans-translation Ala-aminoacylated tmRNA acts like a tRNA, entering the A-site of stalled ribosomes, displacing the stalled mRNA. The ribosome then switches to translate the ORF on the tmRNA; the nascent peptide is terminated with the 'tag peptide' encoded by the tmRNA and targeted for degradation. The ribosome is freed to recommence translation, which seems to be the essential function of trans-translation. Required for trans-translation. Probably required for sporulation; deletion of the gene for tmRNA impairs sporulation via its effect on trans-translation, and as smpB is required for trans-translation under non-stress conditions, it is also probably required during sporulation. The chain is SsrA-binding protein from Bacillus subtilis (strain 168).